We begin with the raw amino-acid sequence, 357 residues long: MSRTSTSRYWSAVVGALTPYVPGEQPKLANLVKLNTNENPYGPSPRVLEALRGEVGDTLRLYPDPNSDRLRAAIAAYHAVSPDQVFVGNGSDEVLAHTFLALLKHERPVFFPDITYSFYPVYCGLYGIAHRAIPLDDAFEIRVDDYLAPKGGVIFPNPNAPTGRLLALGEIERLLAANRDSVVVIDEAYVDFGGDSAVPLVARHPQLLVTRTLSKSHALAGLRVGYAVGQAPLIEALNRVKDSFNSYPLDRFAQAGALASIEDRAYFESICARVIATRTRLVDAMESLGFEVLPSAANFIFARHPAHDGEALAARLRERSIIVRHFKNPARIAPFLRITVGTDAQCDALVDALKALC.

Lys215 carries the N6-(pyridoxal phosphate)lysine modification.

It belongs to the class-II pyridoxal-phosphate-dependent aminotransferase family. Histidinol-phosphate aminotransferase subfamily. In terms of assembly, homodimer. Pyridoxal 5'-phosphate serves as cofactor.

It catalyses the reaction L-histidinol phosphate + 2-oxoglutarate = 3-(imidazol-4-yl)-2-oxopropyl phosphate + L-glutamate. It participates in amino-acid biosynthesis; L-histidine biosynthesis; L-histidine from 5-phospho-alpha-D-ribose 1-diphosphate: step 7/9. This is Histidinol-phosphate aminotransferase 2 from Thiobacillus denitrificans (strain ATCC 25259 / T1).